The sequence spans 140 residues: Ribosome maturation factor RimP (140 aa).

It belongs to the RimP family.

The protein resides in the cytoplasm. In terms of biological role, required for maturation of 30S ribosomal subunits. In Campylobacter fetus subsp. fetus (strain 82-40), this protein is Ribosome maturation factor RimP.